Reading from the N-terminus, the 427-residue chain is 3-phosphoshikimate 1-carboxyvinyltransferase (427 aa).

Residues lysine 22, serine 23, and arginine 27 each contribute to the 3-phosphoshikimate site. Lysine 22 is a phosphoenolpyruvate binding site. The phosphoenolpyruvate site is built by glycine 96 and arginine 124. Residues serine 169, serine 170, glutamine 171, serine 197, aspartate 313, asparagine 336, and lysine 340 each contribute to the 3-phosphoshikimate site. Glutamine 171 lines the phosphoenolpyruvate pocket. The active-site Proton acceptor is the aspartate 313. Positions 344, 386, and 411 each coordinate phosphoenolpyruvate.

The protein belongs to the EPSP synthase family. In terms of assembly, monomer.

The protein resides in the cytoplasm. The catalysed reaction is 3-phosphoshikimate + phosphoenolpyruvate = 5-O-(1-carboxyvinyl)-3-phosphoshikimate + phosphate. It participates in metabolic intermediate biosynthesis; chorismate biosynthesis; chorismate from D-erythrose 4-phosphate and phosphoenolpyruvate: step 6/7. Functionally, catalyzes the transfer of the enolpyruvyl moiety of phosphoenolpyruvate (PEP) to the 5-hydroxyl of shikimate-3-phosphate (S3P) to produce enolpyruvyl shikimate-3-phosphate and inorganic phosphate. In Escherichia coli (strain SMS-3-5 / SECEC), this protein is 3-phosphoshikimate 1-carboxyvinyltransferase.